Consider the following 342-residue polypeptide: Mitochondrial fission factor (342 aa).

The Cytoplasmic portion of the chain corresponds to 1-322 (MSKGTSSDTS…ENKERAKREM (322 aa)). Phosphothreonine is present on T115. A146 is modified (phosphoserine). R149 is subject to Phosphothreonine. Phosphoserine occurs at positions 151, 155, 157, and 172. At T200 the chain carries Phosphothreonine. Phosphoserine is present on residues S202, S229, S233, and S295. A coiled-coil region spans residues 291 to 322 (VDAASLRRQIIKLNRRLQLLEEENKERAKREM). The chain crosses the membrane as a helical; Anchor for type IV membrane protein span at residues 323–340 (VMYSITVAFWLLNSWLWF). Over 341–342 (RR) the chain is Mitochondrial intermembrane.

Belongs to the Tango11 family. As to quaternary structure, homodimer. Interacts with DNM1L. Interacts with C11orf65/MFI; the interaction inhibits MFF interaction with DNM1L. In terms of tissue distribution, highly expressed in heart, kidney, liver, brain, muscle, and stomach.

It localises to the mitochondrion outer membrane. The protein resides in the peroxisome. Its subcellular location is the cytoplasmic vesicle. The protein localises to the secretory vesicle. It is found in the synaptic vesicle. Functionally, plays a role in mitochondrial and peroxisomal fission. Promotes the recruitment and association of the fission mediator dynamin-related protein 1 (DNM1L) to the mitochondrial surface. May be involved in regulation of synaptic vesicle membrane dynamics by recruitment of DNM1L to clathrin-containing vesicles. This chain is Mitochondrial fission factor (MFF), found in Homo sapiens (Human).